The sequence spans 920 residues: DNA ligase (920 aa).

NAD(+) contacts are provided by residues 90-94 (DAAYD), 139-140 (SL), and Glu173. Catalysis depends on Lys175, which acts as the N6-AMP-lysine intermediate. Residues Arg196, Glu235, Lys360, and Lys384 each coordinate NAD(+). Zn(2+) is bound by residues Cys481, Cys484, Cys500, and Cys506. The interval 659–691 (RAQGEAAIESAETQGDTASETTGAPTGAEAPLG) is disordered. A compositionally biased stretch (polar residues) spans 669–682 (AETQGDTASETTGA). The 82-residue stretch at 839-920 (SLPQTLAGKT…FAQLLATGTI (82 aa)) folds into the BRCT domain.

This sequence belongs to the NAD-dependent DNA ligase family. LigA subfamily. It depends on Mg(2+) as a cofactor. The cofactor is Mn(2+).

It catalyses the reaction NAD(+) + (deoxyribonucleotide)n-3'-hydroxyl + 5'-phospho-(deoxyribonucleotide)m = (deoxyribonucleotide)n+m + AMP + beta-nicotinamide D-nucleotide.. DNA ligase that catalyzes the formation of phosphodiester linkages between 5'-phosphoryl and 3'-hydroxyl groups in double-stranded DNA using NAD as a coenzyme and as the energy source for the reaction. It is essential for DNA replication and repair of damaged DNA. The sequence is that of DNA ligase from Bifidobacterium longum (strain NCC 2705).